Here is a 426-residue protein sequence, read N- to C-terminus: Glutamate-1-semialdehyde 2,1-aminomutase (426 aa).

The residue at position 265 (Lys265) is an N6-(pyridoxal phosphate)lysine.

Belongs to the class-III pyridoxal-phosphate-dependent aminotransferase family. HemL subfamily. As to quaternary structure, homodimer. Pyridoxal 5'-phosphate is required as a cofactor.

The protein localises to the cytoplasm. It catalyses the reaction (S)-4-amino-5-oxopentanoate = 5-aminolevulinate. Its pathway is porphyrin-containing compound metabolism; protoporphyrin-IX biosynthesis; 5-aminolevulinate from L-glutamyl-tRNA(Glu): step 2/2. In Pseudoalteromonas translucida (strain TAC 125), this protein is Glutamate-1-semialdehyde 2,1-aminomutase.